The primary structure comprises 146 residues: Large ribosomal subunit protein uL15 (146 aa).

The segment at Met-1–Arg-42 is disordered.

Belongs to the universal ribosomal protein uL15 family. Part of the 50S ribosomal subunit.

Its function is as follows. Binds to the 23S rRNA. The chain is Large ribosomal subunit protein uL15 from Mycobacterium leprae (strain Br4923).